The chain runs to 189 residues: Interferon alpha-1 (189 aa).

The first 23 residues, 1–23 (MAPTSAFLTALVLLSCNAICSLG), serve as a signal peptide directing secretion. Disulfide bonds link Cys24–Cys122 and Cys52–Cys162.

Belongs to the alpha/beta interferon family. As to quaternary structure, interacts with CR2.

The protein localises to the secreted. Functionally, produced by macrophages, IFN-alpha have antiviral activities. Interferon stimulates the production of two enzymes: a protein kinase and an oligoadenylate synthetase. The protein is Interferon alpha-1 of Sus scrofa (Pig).